A 338-amino-acid chain; its full sequence is CDP-paratose 2-epimerase (338 aa).

T124 contributes to the substrate binding site. The active-site Proton acceptor is Y164.

It belongs to the NAD(P)-dependent epimerase/dehydratase family. Homotetramer. The cofactor is NAD(+).

The enzyme catalyses CDP-alpha-D-paratose = CDP-3,6-dideoxy-alpha-D-mannose. The protein operates within nucleotide-sugar biosynthesis; CDP-3,6-dideoxy-D-mannose biosynthesis; CDP-3,6-dideoxy-D-mannose from CTP and alpha-D-glucose 1-phosphate: step 5/5. Functionally, catalyzes the isomeration of CDP-paratose to CDP-tyvelose. In Salmonella typhi, this protein is CDP-paratose 2-epimerase (rfbE).